A 200-amino-acid polypeptide reads, in one-letter code: Phospholipase A2 inhibitor gamma subunit A (200 aa).

Positions 1–19 (MKSLHTICLLFIFIARGNS) are cleaved as a signal peptide. 8 cysteine pairs are disulfide-bonded: cysteine 22–cysteine 46, cysteine 25–cysteine 32, cysteine 39–cysteine 67, cysteine 73–cysteine 94, cysteine 95–cysteine 100, cysteine 118–cysteine 143, cysteine 136–cysteine 165, and cysteine 169–cysteine 191. Asparagine 176 carries N-linked (GlcNAc...) asparagine glycosylation.

It belongs to the CNF-like-inhibitor family. Occurs as a mixture of oligomers. Tetrameric arrangement appears to be the predominant quaternary structure. As to expression, expressed by the liver.

The protein resides in the secreted. Functionally, inhibits the enzymatic activity of phospholipase A2 (PA2). In Gloydius brevicaudus siniticus (Chinese mamushi), this protein is Phospholipase A2 inhibitor gamma subunit A.